The primary structure comprises 101 residues: Urease subunit beta (101 aa).

This sequence belongs to the urease beta subunit family. As to quaternary structure, heterotrimer of UreA (gamma), UreB (beta) and UreC (alpha) subunits. Three heterotrimers associate to form the active enzyme.

It is found in the cytoplasm. It catalyses the reaction urea + 2 H2O + H(+) = hydrogencarbonate + 2 NH4(+). The protein operates within nitrogen metabolism; urea degradation; CO(2) and NH(3) from urea (urease route): step 1/1. The polypeptide is Urease subunit beta (Paraburkholderia phytofirmans (strain DSM 17436 / LMG 22146 / PsJN) (Burkholderia phytofirmans)).